The following is a 243-amino-acid chain: Voltage-gated monoatomic cation channel TMEM109 (243 aa).

A signal peptide spans 1 to 33; it reads MAGSGSSAPWGKHLLHAVLMVLVALVLLHSALA. The Lumenal portion of the chain corresponds to 34–83; the sequence is QSHRDFAPPGQQRREAPVDLLTQIGRSVRETLDTWIGPETMHLISETLSQ. The helical transmembrane segment at 84 to 104 threads the bilayer; sequence VMWAISSAISVAFFALSGIAA. Residues 105–135 are Cytoplasmic-facing; that stretch reads QLLTALGLDGDHLTQGLKLSPSQVQTFLLWG. The chain crosses the membrane as a helical span at residues 136-156; it reads AGALVVYWLLSLLLGLVLAVL. Residues 157-185 lie on the Lumenal side of the membrane; sequence GRILGGLKLVIFLAGFVALVRSVPDPSTR. A helical transmembrane segment spans residues 186–205; that stretch reads ALLLLALLTLYALLSRLTGS. Residues 206-243 are Cytoplasmic-facing; the sequence is RASGAQLEAKVRGLERQVDELRWRQRRAAKGARSVEEE.

Homooligomer. Interacts with CRYAB; in the cellular response to DNA damage. In terms of processing, the N-terminus is blocked. Widely expressed. Expressed in skeletal, cardiac and smooth muscle cells, in brain, including neuroglial cells, cerebral cortex neurons and cerebellum, but not Purkinje cells. Also detected in Paneth and Goblet cells of the small intestine (but not in the epithelium), duodenal gland, pancreas, parotid gland, testis, thyroid gland and adrenal gland, as well as in epidermis, choroid plexus, ductus epididymidis, lymphocytes, fibroblasts, endothelial cells and seminiferous epithelial cells (at protein level). Not detected in mucous cells of the duodenal gland, in hepatocytes nor in uriniferous tubules.

The protein resides in the nucleus outer membrane. It localises to the endoplasmic reticulum membrane. Its subcellular location is the sarcoplasmic reticulum membrane. It catalyses the reaction K(+)(in) = K(+)(out). The enzyme catalyses Ca(2+)(in) = Ca(2+)(out). In terms of biological role, functions as a voltage-gated monoatomic cation channel permeable to both potassium and calcium. Plays a role in the cellular response to DNA damage. In Oryctolagus cuniculus (Rabbit), this protein is Voltage-gated monoatomic cation channel TMEM109.